A 251-amino-acid polypeptide reads, in one-letter code: Ubiquinone/menaquinone biosynthesis C-methyltransferase UbiE (251 aa).

S-adenosyl-L-methionine-binding positions include threonine 74, aspartate 95, 123–124, and serine 140; that span reads NA.

It belongs to the class I-like SAM-binding methyltransferase superfamily. MenG/UbiE family.

It carries out the reaction a 2-demethylmenaquinol + S-adenosyl-L-methionine = a menaquinol + S-adenosyl-L-homocysteine + H(+). The catalysed reaction is a 2-methoxy-6-(all-trans-polyprenyl)benzene-1,4-diol + S-adenosyl-L-methionine = a 5-methoxy-2-methyl-3-(all-trans-polyprenyl)benzene-1,4-diol + S-adenosyl-L-homocysteine + H(+). Its pathway is quinol/quinone metabolism; menaquinone biosynthesis; menaquinol from 1,4-dihydroxy-2-naphthoate: step 2/2. It participates in cofactor biosynthesis; ubiquinone biosynthesis. In terms of biological role, methyltransferase required for the conversion of demethylmenaquinol (DMKH2) to menaquinol (MKH2) and the conversion of 2-polyprenyl-6-methoxy-1,4-benzoquinol (DDMQH2) to 2-polyprenyl-3-methyl-6-methoxy-1,4-benzoquinol (DMQH2). The protein is Ubiquinone/menaquinone biosynthesis C-methyltransferase UbiE of Salmonella arizonae (strain ATCC BAA-731 / CDC346-86 / RSK2980).